A 218-amino-acid polypeptide reads, in one-letter code: Peptide methionine sulfoxide reductase MsrA (218 aa).

Residue C54 is part of the active site.

Belongs to the MsrA Met sulfoxide reductase family.

The enzyme catalyses L-methionyl-[protein] + [thioredoxin]-disulfide + H2O = L-methionyl-(S)-S-oxide-[protein] + [thioredoxin]-dithiol. It carries out the reaction [thioredoxin]-disulfide + L-methionine + H2O = L-methionine (S)-S-oxide + [thioredoxin]-dithiol. In terms of biological role, has an important function as a repair enzyme for proteins that have been inactivated by oxidation. Catalyzes the reversible oxidation-reduction of methionine sulfoxide in proteins to methionine. The chain is Peptide methionine sulfoxide reductase MsrA from Azorhizobium caulinodans (strain ATCC 43989 / DSM 5975 / JCM 20966 / LMG 6465 / NBRC 14845 / NCIMB 13405 / ORS 571).